A 255-amino-acid chain; its full sequence is 4-diphosphocytidyl-2-C-methyl-D-erythritol kinase (255 aa).

The active site involves Lys-6. An ATP-binding site is contributed by 95-105 (PVCAGLGGGSS). Asp-137 is an active-site residue.

Belongs to the GHMP kinase family. IspE subfamily.

It catalyses the reaction 4-CDP-2-C-methyl-D-erythritol + ATP = 4-CDP-2-C-methyl-D-erythritol 2-phosphate + ADP + H(+). The protein operates within isoprenoid biosynthesis; isopentenyl diphosphate biosynthesis via DXP pathway; isopentenyl diphosphate from 1-deoxy-D-xylulose 5-phosphate: step 3/6. In terms of biological role, catalyzes the phosphorylation of the position 2 hydroxy group of 4-diphosphocytidyl-2C-methyl-D-erythritol. The sequence is that of 4-diphosphocytidyl-2-C-methyl-D-erythritol kinase from Campylobacter jejuni subsp. jejuni serotype O:6 (strain 81116 / NCTC 11828).